Reading from the N-terminus, the 317-residue chain is COP9 signalosome complex subunit 6b (317 aa).

The region spanning 11–164 is the MPN domain; the sequence is FKLHPLVMLN…VTIYESEFHV (154 aa).

Belongs to the peptidase M67A family. CSN6 subfamily. Component of the CSN complex, probably composed of CSN1, CSN2, CSN3, CSN4, CSN5 (CSN5A or CSN5B), CSN6 (CSN6A or CSN6B), CSN7 and CSN8. Interacts with itself. In the complex, it probably interacts directly with CSN4, CSN5A or CSN5B, and CSN7. Binds to the translation initiation factors TIF3E1.

The protein localises to the cytoplasm. Its subcellular location is the nucleus. In terms of biological role, component of the COP9 signalosome complex (CSN), a complex involved in various cellular and developmental processes such as photomorphogenesis and auxin and jasmonate responses. The CSN complex is an essential regulator of the ubiquitin (Ubl) conjugation pathway by mediating the deneddylation of the cullin subunits of SCF-type E3 ligase complexes, leading to decrease the Ubl ligase activity of SCF. It is involved in repression of photomorphogenesis in darkness by regulating the activity of COP1-containing Ubl ligase complexes. The complex is also required for degradation of PSIAA6 by regulating the activity of the Ubl ligase SCF-TIR complex. Essential for the structural integrity of the CSN holocomplex. In Arabidopsis thaliana (Mouse-ear cress), this protein is COP9 signalosome complex subunit 6b.